Reading from the N-terminus, the 239-residue chain is Orotidine 5'-phosphate decarboxylase (239 aa).

Substrate-binding positions include Asp-11, Lys-33, Asp-60–Thr-69, Thr-123, Arg-185, Gln-194, Gly-214, and Arg-215. Residue Lys-62 is the Proton donor of the active site.

It belongs to the OMP decarboxylase family. Type 1 subfamily. In terms of assembly, homodimer.

The enzyme catalyses orotidine 5'-phosphate + H(+) = UMP + CO2. It functions in the pathway pyrimidine metabolism; UMP biosynthesis via de novo pathway; UMP from orotate: step 2/2. Functionally, catalyzes the decarboxylation of orotidine 5'-monophosphate (OMP) to uridine 5'-monophosphate (UMP). The protein is Orotidine 5'-phosphate decarboxylase of Bacillus licheniformis (strain ATCC 14580 / DSM 13 / JCM 2505 / CCUG 7422 / NBRC 12200 / NCIMB 9375 / NCTC 10341 / NRRL NRS-1264 / Gibson 46).